An 872-amino-acid chain; its full sequence is DNA mismatch repair protein MutS (872 aa).

626–633 (GPNMAGKS) provides a ligand contact to ATP.

Belongs to the DNA mismatch repair MutS family.

Functionally, this protein is involved in the repair of mismatches in DNA. It is possible that it carries out the mismatch recognition step. This protein has a weak ATPase activity. The protein is DNA mismatch repair protein MutS of Chlorobium phaeobacteroides (strain DSM 266 / SMG 266 / 2430).